A 294-amino-acid chain; its full sequence is Indole-3-glycerol phosphate synthase (294 aa).

The protein belongs to the TrpC family.

The enzyme catalyses 1-(2-carboxyphenylamino)-1-deoxy-D-ribulose 5-phosphate + H(+) = (1S,2R)-1-C-(indol-3-yl)glycerol 3-phosphate + CO2 + H2O. It functions in the pathway amino-acid biosynthesis; L-tryptophan biosynthesis; L-tryptophan from chorismate: step 4/5. In Synechococcus sp. (strain CC9902), this protein is Indole-3-glycerol phosphate synthase.